A 99-amino-acid chain; its full sequence is NADH-quinone oxidoreductase subunit K (99 aa).

3 consecutive transmembrane segments (helical) span residues 2-22 (PVEYYLWLASILFGIGLLGVL), 28-48 (LILMMSVELMLNAANLTFLAF), and 60-80 (IAFFVIAVAAAEAAVGLAVVI).

The protein belongs to the complex I subunit 4L family. As to quaternary structure, NDH-1 is composed of 14 different subunits. Subunits NuoA, H, J, K, L, M, N constitute the membrane sector of the complex.

The protein localises to the cell inner membrane. It carries out the reaction a quinone + NADH + 5 H(+)(in) = a quinol + NAD(+) + 4 H(+)(out). Functionally, NDH-1 shuttles electrons from NADH, via FMN and iron-sulfur (Fe-S) centers, to quinones in the respiratory chain. The immediate electron acceptor for the enzyme in this species is believed to be ubiquinone. Couples the redox reaction to proton translocation (for every two electrons transferred, four hydrogen ions are translocated across the cytoplasmic membrane), and thus conserves the redox energy in a proton gradient. The polypeptide is NADH-quinone oxidoreductase subunit K (Anaeromyxobacter dehalogenans (strain 2CP-C)).